Here is an 89-residue protein sequence, read N- to C-terminus: Small ribosomal subunit protein uS15 (89 aa).

It belongs to the universal ribosomal protein uS15 family. As to quaternary structure, part of the 30S ribosomal subunit. Forms a bridge to the 50S subunit in the 70S ribosome, contacting the 23S rRNA.

One of the primary rRNA binding proteins, it binds directly to 16S rRNA where it helps nucleate assembly of the platform of the 30S subunit by binding and bridging several RNA helices of the 16S rRNA. Its function is as follows. Forms an intersubunit bridge (bridge B4) with the 23S rRNA of the 50S subunit in the ribosome. This is Small ribosomal subunit protein uS15 from Bartonella quintana (strain Toulouse) (Rochalimaea quintana).